Consider the following 458-residue polypeptide: Opine oxidase subunit A (458 aa).

It to T-protein and to dimethylglycine dehydrogenase. Heterodimer of a subunit A and a subunit B.

Its pathway is opine metabolism; octopine degradation. In terms of biological role, oxidative cleavage of octopine into L-arginine and pyruvate. This chain is Opine oxidase subunit A (ooxA), found in Rhizobium meliloti (strain 1021) (Ensifer meliloti).